The following is a 153-amino-acid chain: Pro-corazonin (153 aa).

A signal peptide spans 1–20; it reads MLRLLLLPLFLFTLSMACMG. Pyrrolidone carboxylic acid is present on glutamine 21. Asparagine 31 carries the asparagine amide modification. Residues 64-153 constitute a propeptide that is removed on maturation; that stretch reads LERCLLQLQH…AVEPNDYGKH (90 aa).

The protein belongs to the corazonin family. Expression is restricted to 24 neurons in the larval CNS (8 in the brain and 16 in the ventral nerve cord) and 12-16 neurons in the pars lateralis of the adult brain.

The protein localises to the secreted. Functionally, cardioactive peptide. Corazonin is probably involved in the physiological regulation of the heart beat. Clock (Clk) and cycle (cyc) proteins negatively regulate Crz transcription in a cell-specific manner. In Drosophila virilis (Fruit fly), this protein is Pro-corazonin (Crz).